The chain runs to 775 residues: Putative ankyrin repeat protein RBE_0801 (775 aa).

ANK repeat units follow at residues 66–95 (HSLP…ENTE), 300–329 (ATTV…KVEN), 331–356 (ILQE…IKSF), 357–385 (TNDY…NIVG), 447–476 (IPDV…SFDF), and 523–552 (GDDK…KQGI).

The protein is Putative ankyrin repeat protein RBE_0801 of Rickettsia bellii (strain RML369-C).